We begin with the raw amino-acid sequence, 505 residues long: 4-alpha-glucanotransferase (505 aa).

It belongs to the disproportionating enzyme family.

It localises to the cytoplasm. It catalyses the reaction Transfers a segment of a (1-&gt;4)-alpha-D-glucan to a new position in an acceptor, which may be glucose or a (1-&gt;4)-alpha-D-glucan.. The polypeptide is 4-alpha-glucanotransferase (malQ) (Streptococcus pneumoniae serotype 4 (strain ATCC BAA-334 / TIGR4)).